Reading from the N-terminus, the 125-residue chain is Probable endoribonuclease HigB1 (125 aa).

Belongs to the mycobacterial HigB family.

In terms of biological role, toxic component of an atypical, type II toxin-antitoxin chaperone (TAC) system. Probably an endoribonuclease, neutralized by its cognate antitoxin HigA which also requires SecB-like chaperone MT2006 (AC Q7D7P7). The sequence is that of Probable endoribonuclease HigB1 from Mycobacterium tuberculosis (strain CDC 1551 / Oshkosh).